The sequence spans 1479 residues: Chromosome partition protein MukB (1479 aa).

34 to 41 (GGNGAGKS) provides a ligand contact to ATP. Coiled-coil stretches lie at residues 337–418 (LNLV…QYQQ), 511–604 (QAER…APVW), 780–810 (RAAR…DVQK), 847–1116 (ELDR…AKAG), and 1206–1265 (DDPV…LQAV). The segment at 666-783 (PGGSEDPRLN…EVPLFGRAAR (118 aa)) is flexible hinge.

It belongs to the SMC family. MukB subfamily. Homodimerization via its hinge domain. Binds to DNA via its C-terminal region. Interacts, and probably forms a ternary complex, with MukE and MukF via its C-terminal region. The complex formation is stimulated by calcium or magnesium. Interacts with tubulin-related protein FtsZ.

It localises to the cytoplasm. Its subcellular location is the nucleoid. Its function is as follows. Plays a central role in chromosome condensation, segregation and cell cycle progression. Functions as a homodimer, which is essential for chromosome partition. Involved in negative DNA supercoiling in vivo, and by this means organize and compact chromosomes. May achieve or facilitate chromosome segregation by condensation DNA from both sides of a centrally located replisome during cell division. This chain is Chromosome partition protein MukB, found in Pectobacterium atrosepticum (strain SCRI 1043 / ATCC BAA-672) (Erwinia carotovora subsp. atroseptica).